The chain runs to 745 residues: Jacalin-related lectin 4 (745 aa).

Jacalin-type lectin domains lie at 2-148 (AQKL…YFAP), 151-294 (PTKF…YFSP), 307-448 (AEKL…YFVT), 451-594 (PTKF…YFSR), and 601-744 (AETL…YVMP).

Belongs to the jacalin lectin family.

The sequence is that of Jacalin-related lectin 4 (JAL4) from Arabidopsis thaliana (Mouse-ear cress).